The sequence spans 302 residues: Deoxyribonuclease-1-like 1 (302 aa).

A signal peptide spans methionine 1–alanine 18. Active-site residues include glutamate 97 and histidine 148. Cysteine 187 and cysteine 224 form a disulfide bridge. The N-linked (GlcNAc...) asparagine glycan is linked to asparagine 261.

This sequence belongs to the DNase I family. Highest levels in skeletal and cardiac muscles. Detectable in all other tissues tested except brain.

The protein localises to the endoplasmic reticulum. This chain is Deoxyribonuclease-1-like 1 (DNASE1L1), found in Homo sapiens (Human).